The primary structure comprises 420 residues: MDLHSYMQDLGRAARAASRELARADTRTKNAALLAMADAIERDAAKLLAANADDVKAAVAAGLAPAMVDRLTLTEKTVAGMAEGLRQIASLPDPVGEMGEFAYRPSGIQLGKMRVPLGVIGIIYEARPNVTADAAGLCLKAGNACILRGGSEAFRSNQAIAACVHEGLAAASLPTAAVQVLETTDRAAVGLLITMPEYVDVIVPRGGKGLIARISAEARVPVIKHLDGNCHTYVDVDADLEKALPVCDNAKTQRYGTCNTMETLLVHEVVAEAFLPAICQVYLDKGVELRGCATTRALIGADKVQPATEEDWLTEYAAPILAIKVIDSLDTAISHINHYGSHHTDVIITENYSSARRFLREVDSSSVMVNASSRFADGFEYGLGAEIGISTDKIHARGPVGLKGLTSEKWIVFGDGQVRG.

This sequence belongs to the gamma-glutamyl phosphate reductase family.

It localises to the cytoplasm. The catalysed reaction is L-glutamate 5-semialdehyde + phosphate + NADP(+) = L-glutamyl 5-phosphate + NADPH + H(+). The protein operates within amino-acid biosynthesis; L-proline biosynthesis; L-glutamate 5-semialdehyde from L-glutamate: step 2/2. Catalyzes the NADPH-dependent reduction of L-glutamate 5-phosphate into L-glutamate 5-semialdehyde and phosphate. The product spontaneously undergoes cyclization to form 1-pyrroline-5-carboxylate. The chain is Gamma-glutamyl phosphate reductase from Laribacter hongkongensis (strain HLHK9).